Here is a 198-residue protein sequence, read N- to C-terminus: Na(+)-translocating NADH-quinone reductase subunit E (198 aa).

The next 6 helical transmembrane spans lie at 11–31 (SIFI…FLAV), 39–59 (MGLG…NNLI), 77–97 (FLSF…LEMA), 110–130 (GIFL…SFMV), 140–160 (VVYG…MAGI), and 176–196 (LGIT…FSGI).

The protein belongs to the NqrDE/RnfAE family. As to quaternary structure, composed of six subunits; NqrA, NqrB, NqrC, NqrD, NqrE and NqrF.

The protein localises to the cell inner membrane. The enzyme catalyses a ubiquinone + n Na(+)(in) + NADH + H(+) = a ubiquinol + n Na(+)(out) + NAD(+). Its function is as follows. NQR complex catalyzes the reduction of ubiquinone-1 to ubiquinol by two successive reactions, coupled with the transport of Na(+) ions from the cytoplasm to the periplasm. NqrA to NqrE are probably involved in the second step, the conversion of ubisemiquinone to ubiquinol. This chain is Na(+)-translocating NADH-quinone reductase subunit E, found in Aeromonas salmonicida (strain A449).